Here is a 648-residue protein sequence, read N- to C-terminus: Biosynthetic arginine decarboxylase (648 aa).

The residue at position 109 (Lys-109) is an N6-(pyridoxal phosphate)lysine. 291–301 (LDVGGGLGVDY) contributes to the substrate binding site.

Belongs to the Orn/Lys/Arg decarboxylase class-II family. SpeA subfamily. Mg(2+) is required as a cofactor. Pyridoxal 5'-phosphate serves as cofactor.

It catalyses the reaction L-arginine + H(+) = agmatine + CO2. Its function is as follows. Catalyzes the biosynthesis of agmatine from arginine. The protein is Biosynthetic arginine decarboxylase of Prochlorococcus marinus (strain MIT 9313).